A 142-amino-acid polypeptide reads, in one-letter code: Small heat shock protein IbpB (142 aa).

The sHSP domain occupies A26 to R137.

This sequence belongs to the small heat shock protein (HSP20) family. As to quaternary structure, homodimer. Forms homomultimers of about 100-150 subunits at optimal growth temperatures. Conformation changes to oligomers at high temperatures or high ionic concentrations. The decrease in size of the multimers is accompanied by an increase in chaperone activity.

It is found in the cytoplasm. Functionally, associates with aggregated proteins, together with IbpA, to stabilize and protect them from irreversible denaturation and extensive proteolysis during heat shock and oxidative stress. Aggregated proteins bound to the IbpAB complex are more efficiently refolded and reactivated by the ATP-dependent chaperone systems ClpB and DnaK/DnaJ/GrpE. Its activity is ATP-independent. This is Small heat shock protein IbpB from Klebsiella pneumoniae subsp. pneumoniae (strain ATCC 700721 / MGH 78578).